Reading from the N-terminus, the 97-residue chain is MKIRPLHDRIVVRRKEEETATAGGIILPGAAAEKPNQGVVISVGTGRILDNGSVQALAVNEGDVVVFGKYSGQNTIDIDGEELLILNESDIYGVLEA.

The protein belongs to the GroES chaperonin family. In terms of assembly, heptamer of 7 subunits arranged in a ring. Interacts with the chaperonin GroEL.

It localises to the cytoplasm. Functionally, together with the chaperonin GroEL, plays an essential role in assisting protein folding. The GroEL-GroES system forms a nano-cage that allows encapsulation of the non-native substrate proteins and provides a physical environment optimized to promote and accelerate protein folding. GroES binds to the apical surface of the GroEL ring, thereby capping the opening of the GroEL channel. This Oleispira antarctica protein is Co-chaperonin GroES.